The sequence spans 172 residues: Putative defense protein (172 aa).

The signal sequence occupies residues 1–21; the sequence is MKLVVAAVLAMAASRWRRLSA. The 151-residue stretch at 22 to 172 folds into the Reelin domain; sequence HGQVPSSTCA…LRQLDNAVAA (151 aa).

Belongs to the insect defense protein family. In adults, in hemolymph.

The protein localises to the secreted. Functionally, may have antimicrobial activity. In Locusta migratoria (Migratory locust), this protein is Putative defense protein.